Here is a 135-residue protein sequence, read N- to C-terminus: Nucleoside diphosphate kinase (135 aa).

6 residues coordinate ATP: K9, F57, R85, T91, R102, and N112. H115 (pros-phosphohistidine intermediate) is an active-site residue.

This sequence belongs to the NDK family. Homotetramer. The cofactor is Mg(2+).

The protein localises to the cytoplasm. The catalysed reaction is a 2'-deoxyribonucleoside 5'-diphosphate + ATP = a 2'-deoxyribonucleoside 5'-triphosphate + ADP. It carries out the reaction a ribonucleoside 5'-diphosphate + ATP = a ribonucleoside 5'-triphosphate + ADP. Functionally, major role in the synthesis of nucleoside triphosphates other than ATP. The ATP gamma phosphate is transferred to the NDP beta phosphate via a ping-pong mechanism, using a phosphorylated active-site intermediate. This Thermobifida fusca (strain YX) protein is Nucleoside diphosphate kinase.